We begin with the raw amino-acid sequence, 370 residues long: Cysteine-type anaerobic sulfatase-maturating enzyme (370 aa).

Residues 1 to 227 (MPPLSLLIKP…LKNLFDLWYE (227 aa)) form the Radical SAM core domain. [4Fe-4S] cluster contacts are provided by C15 and C19. S-adenosyl-L-methionine is bound at residue Y21. C22 contributes to the [4Fe-4S] cluster binding site. Positions 66, 122, 134, and 195 each coordinate S-adenosyl-L-methionine. Residues C255, C261, and C276 each contribute to the [4Fe-4S] cluster site. Catalysis depends on D277, which acts as the Proton acceptor. 5 residues coordinate [4Fe-4S] cluster: C317, C320, C326, C330, and C348.

It belongs to the radical SAM superfamily. Anaerobic sulfatase-maturating enzyme family. The cofactor is [4Fe-4S] cluster.

It catalyses the reaction L-cysteinyl-[sulfatase] + S-adenosyl-L-methionine + H2O = 3-oxo-L-alanyl-[sulfatase] + hydrogen sulfide + 5'-deoxyadenosine + L-methionine + 2 H(+). The protein operates within protein modification; sulfatase oxidation. Involved in 'Cys-type' sulfatase maturation under anaerobic conditions. Catalyzes the post-translational modification of cysteine into 3-oxoalanine (also known as C(alpha)-formylglycine (FGly)), by a free radical chemical mechanism initiated via the reductive cleavage of S-adenosyl-L-methionine (SAM). The polypeptide is Cysteine-type anaerobic sulfatase-maturating enzyme (Clostridium perfringens (strain 13 / Type A)).